Here is a 108-residue protein sequence, read N- to C-terminus: MFVQLRKMTVKEGFADKVIERFSAEGIIEKQEGLIDVTVLEKNVRRGDEEVVVMIRWESEDHWKQWEKSDAHIAGHKANKGKPKPDYLISTEVSMYHVRAVKQGTYNQ.

An ABM domain is found at 2-95; it reads FVQLRKMTVK…DYLISTEVSM (94 aa). His76 serves as a coordination point for heme.

The protein belongs to the antibiotic biosynthesis monooxygenase family. As to quaternary structure, homodimer.

Its subcellular location is the cytoplasm. The catalysed reaction is heme b + 3 reduced [NADPH--hemoprotein reductase] + 3 O2 = biliverdin IXalpha + CO + Fe(2+) + 3 oxidized [NADPH--hemoprotein reductase] + 3 H2O + H(+). In terms of biological role, allows bacterial pathogens to use the host heme as an iron source. Catalyzes the oxidative degradation of the heme macrocyclic porphyrin ring in the presence of a suitable electron donor such as ascorbate or NADPH--cytochrome P450 reductase, with subsequent release of free iron. This Bacillus subtilis (strain 168) protein is Heme-degrading monooxygenase HmoA (hmoA).